The sequence spans 307 residues: Ornithine carbamoyltransferase (307 aa).

Carbamoyl phosphate contacts are provided by residues 50–53, Gln77, Arg101, and 128–131; these read STRT and HPCQ. Residues Asn160, Asp224, and 228–229 contribute to the L-ornithine site; that span reads SM. Residues 264–265 and Arg292 each bind carbamoyl phosphate; that span reads CL.

Belongs to the aspartate/ornithine carbamoyltransferase superfamily. OTCase family.

The protein resides in the cytoplasm. The catalysed reaction is carbamoyl phosphate + L-ornithine = L-citrulline + phosphate + H(+). Its pathway is amino-acid biosynthesis; L-arginine biosynthesis; L-arginine from L-ornithine and carbamoyl phosphate: step 1/3. With respect to regulation, inhibited by arginine, norvaline. Reversibly catalyzes the transfer of the carbamoyl group from carbamoyl phosphate (CP) to the N(epsilon) atom of ornithine (ORN) to produce L-citrulline, which is a substrate for argininosuccinate synthetase, the enzyme involved in the final step in arginine biosynthesis. This Mycolicibacterium smegmatis (strain ATCC 700084 / mc(2)155) (Mycobacterium smegmatis) protein is Ornithine carbamoyltransferase.